The primary structure comprises 1065 residues: DNA ligase 4 (1065 aa).

Residues 1-20 (MAVHAPYNHAPPPTQEINGQ) are disordered. Residues Glu-295, Lys-297, Leu-298, Arg-302, Glu-357, Phe-387, Glu-452, Lys-457, Lys-474, and Lys-476 each contribute to the ATP site. Residue Lys-297 is the N6-AMP-lysine intermediate of the active site. Residue Glu-357 participates in Mg(2+) binding. Position 452 (Glu-452) interacts with Mg(2+). One can recognise a BRCT 1 domain in the interval 696–775 (VETSIFSDMT…TALPFLKEFL (80 aa)). Positions 825-928 (GEDKDEIDVE…SDVGVNGDDY (104 aa)) are disordered. Basic and acidic residues-rich tracts occupy residues 834 to 864 (EESR…KKLQ) and 886 to 900 (MSLK…ERSR). A BRCT 2 domain is found at 954–1064 (DEDRIFYHLA…TLLDEDLYKP (111 aa)).

It belongs to the ATP-dependent DNA ligase family. The cofactor is Mg(2+).

It localises to the nucleus. It catalyses the reaction ATP + (deoxyribonucleotide)n-3'-hydroxyl + 5'-phospho-(deoxyribonucleotide)m = (deoxyribonucleotide)n+m + AMP + diphosphate.. In terms of biological role, DNA ligase involved in DNA non-homologous end joining (NHEJ); required for double-strand break (DSB) repair. The polypeptide is DNA ligase 4 (LIG4) (Cryptococcus neoformans var. neoformans serotype D (strain B-3501A) (Filobasidiella neoformans)).